We begin with the raw amino-acid sequence, 353 residues long: Photosystem II protein D1 (353 aa).

Position 2 is an N-acetylthreonine (Thr-2). Residue Thr-2 is modified to Phosphothreonine. The next 3 helical transmembrane spans lie at 29-46 (YIGWFGVLMIPTLLTATS), 118-133 (HFLLGVACYMGREWEL), and 142-156 (WIAVAYSAPVAAATA). His-118 contributes to the chlorophyll a binding site. Tyr-126 is a pheophytin a binding site. Positions 170 and 189 each coordinate [CaMn4O5] cluster. Residues 197–218 (FHMLGVAGVFGGSLFSAMHGSL) form a helical membrane-spanning segment. His-198 serves as a coordination point for chlorophyll a. A quinone is bound by residues His-215 and 264–265 (SF). His-215 lines the Fe cation pocket. His-272 serves as a coordination point for Fe cation. Residues 274 to 288 (FLAAWPVAGIWFTAL) traverse the membrane as a helical segment. Positions 332, 333, 342, and 344 each coordinate [CaMn4O5] cluster. The propeptide occupies 345-353 (AVESISIGG).

Belongs to the reaction center PufL/M/PsbA/D family. PSII is composed of 1 copy each of membrane proteins PsbA, PsbB, PsbC, PsbD, PsbE, PsbF, PsbH, PsbI, PsbJ, PsbK, PsbL, PsbM, PsbT, PsbX, PsbY, PsbZ, Psb30/Ycf12, at least 3 peripheral proteins of the oxygen-evolving complex and a large number of cofactors. It forms dimeric complexes. The D1/D2 heterodimer binds P680, chlorophylls that are the primary electron donor of PSII, and subsequent electron acceptors. It shares a non-heme iron and each subunit binds pheophytin, quinone, additional chlorophylls, carotenoids and lipids. D1 provides most of the ligands for the Mn4-Ca-O5 cluster of the oxygen-evolving complex (OEC). There is also a Cl(-1) ion associated with D1 and D2, which is required for oxygen evolution. The PSII complex binds additional chlorophylls, carotenoids and specific lipids. is required as a cofactor. In terms of processing, tyr-161 forms a radical intermediate that is referred to as redox-active TyrZ, YZ or Y-Z. Post-translationally, C-terminally processed by CTPA; processing is essential to allow assembly of the oxygen-evolving complex and thus photosynthetic growth.

It localises to the plastid. It is found in the chloroplast thylakoid membrane. It carries out the reaction 2 a plastoquinone + 4 hnu + 2 H2O = 2 a plastoquinol + O2. Its function is as follows. Photosystem II (PSII) is a light-driven water:plastoquinone oxidoreductase that uses light energy to abstract electrons from H(2)O, generating O(2) and a proton gradient subsequently used for ATP formation. It consists of a core antenna complex that captures photons, and an electron transfer chain that converts photonic excitation into a charge separation. The D1/D2 (PsbA/PsbD) reaction center heterodimer binds P680, the primary electron donor of PSII as well as several subsequent electron acceptors. This chain is Photosystem II protein D1, found in Pinus koraiensis (Korean pine).